Consider the following 414-residue polypeptide: Transforming growth factor beta-2 proprotein (414 aa).

Positions 1-20 are cleaved as a signal peptide; it reads MHYCVLSAFLLLHLVTAALS. N-linked (GlcNAc...) asparagine glycosylation is found at Asn72, Asn140, and Asn241. Disulfide bonds link Cys309–Cys318, Cys317–Cys380, Cys346–Cys411, and Cys350–Cys413.

It belongs to the TGF-beta family. As to quaternary structure, interacts with the serine proteases, HTRA1 and HTRA3. Interacts with ASPN. Interacts with MFAP5. In terms of assembly, interacts with Transforming growth factor beta-2 (TGF-beta-2) chain; interaction is non-covalent and maintains (TGF-beta-2) in a latent state. Interacts with LRRC32/GARP; leading to regulate activation of TGF-beta-2. Interacts with NREP; the interaction results in a decrease in TGFB2 autoinduction. Transforming growth factor beta-2: Homodimer; disulfide-linked. Transforming growth factor beta-2: Interacts with TGF-beta receptors (TGFBR1 and TGFBR2), leading to signal transduction. The precursor proprotein is cleaved in the Golgi apparatus to form Transforming growth factor beta-2 (TGF-beta-2) and Latency-associated peptide (LAP) chains, which remain non-covalently linked, rendering TGF-beta-2 inactive.

Its subcellular location is the secreted. It is found in the extracellular space. The protein localises to the extracellular matrix. Its function is as follows. Precursor of the Latency-associated peptide (LAP) and Transforming growth factor beta-2 (TGF-beta-2) chains, which constitute the regulatory and active subunit of TGF-beta-2, respectively. In terms of biological role, required to maintain the Transforming growth factor beta-2 (TGF-beta-2) chain in a latent state during storage in extracellular matrix. Associates non-covalently with TGF-beta-2 and regulates its activation via interaction with 'milieu molecules', such as LTBP1 and LRRC32/GARP, that control activation of TGF-beta-2. Functionally, multifunctional protein that regulates various processes such as angiogenesis and heart development. Activation into mature form follows different steps: following cleavage of the proprotein in the Golgi apparatus, Latency-associated peptide (LAP) and Transforming growth factor beta-2 (TGF-beta-2) chains remain non-covalently linked rendering TGF-beta-2 inactive during storage in extracellular matrix. At the same time, LAP chain interacts with 'milieu molecules', such as LTBP1 and LRRC32/GARP, that control activation of TGF-beta-2 and maintain it in a latent state during storage in extracellular milieus. Once activated following release of LAP, TGF-beta-2 acts by binding to TGF-beta receptors (TGFBR1 and TGFBR2), which transduce signal. The chain is Transforming growth factor beta-2 proprotein (TGFB2) from Mustela putorius furo (European domestic ferret).